Here is a 476-residue protein sequence, read N- to C-terminus: Probable pectin lyase F (476 aa).

A signal peptide spans 1-20 (MTLLRHLLTATALLGASVQA). A disulfide bond links C84 and C108. N103 and N131 each carry an N-linked (GlcNAc...) asparagine glycan. R258 is an active-site residue. N277 and N318 each carry an N-linked (GlcNAc...) asparagine glycan. Cysteines 325 and 333 form a disulfide. N-linked (GlcNAc...) asparagine glycosylation is present at N385. The segment at 412–476 (FVPAYSEAGP…HHHQGHGRGY (65 aa)) is disordered. Over residues 426 to 453 (VPTQPSWSWRTVTNGPAPTGAPSDSPSA) the composition is skewed to polar residues. The span at 465-476 (NKHHHQGHGRGY) shows a compositional bias: basic residues.

The protein belongs to the polysaccharide lyase 1 family.

It localises to the secreted. It catalyses the reaction Eliminative cleavage of (1-&gt;4)-alpha-D-galacturonan methyl ester to give oligosaccharides with 4-deoxy-6-O-methyl-alpha-D-galact-4-enuronosyl groups at their non-reducing ends.. In terms of biological role, pectinolytic enzymes consist of four classes of enzymes: pectin lyase, polygalacturonase, pectin methylesterase and rhamnogalacturonase. Among pectinolytic enzymes, pectin lyase is the most important in depolymerization of pectin, since it cleaves internal glycosidic bonds of highly methylated pectins. The protein is Probable pectin lyase F (pelF) of Aspergillus niger (strain ATCC MYA-4892 / CBS 513.88 / FGSC A1513).